The sequence spans 689 residues: Glycine--tRNA ligase beta subunit (689 aa).

This sequence belongs to the class-II aminoacyl-tRNA synthetase family. As to quaternary structure, tetramer of two alpha and two beta subunits.

The protein resides in the cytoplasm. It catalyses the reaction tRNA(Gly) + glycine + ATP = glycyl-tRNA(Gly) + AMP + diphosphate. This Acinetobacter baumannii (strain ACICU) protein is Glycine--tRNA ligase beta subunit.